The chain runs to 476 residues: Glycogen synthase (476 aa).

ADP-alpha-D-glucose is bound at residue Lys15.

This sequence belongs to the glycosyltransferase 1 family. Bacterial/plant glycogen synthase subfamily.

It carries out the reaction [(1-&gt;4)-alpha-D-glucosyl](n) + ADP-alpha-D-glucose = [(1-&gt;4)-alpha-D-glucosyl](n+1) + ADP + H(+). It participates in glycan biosynthesis; glycogen biosynthesis. Its function is as follows. Synthesizes alpha-1,4-glucan chains using ADP-glucose. The chain is Glycogen synthase from Marinomonas sp. (strain MWYL1).